The following is a 411-amino-acid chain: MPAPAATRRDRIEDELGAHNYQPLDVVLARGSGVWLYDTAGRRYLDCLSAYSAVNQGHCHPRILAAMVEQAQRLTLTSRAFRHDQLAPLYEDLARLTGAHKVLPMNSGAEAVETALKAVRKWGYEARGVPAGQAEIIVCANNFHGRTLGIVGFSTDPDARGGYGPFAPGFTVVPFGDFAALQAAVTPRTVAFLVEPIQGEAGVILPPPGYFRQVRKLCSERDIVLILDEIQTGLGRTGAFLAEAHEGIEADVTLIGKALSGGFYPVSAVLSNQAVLGIFQPGQHGSTFGGNPLACAVARAALRVLHDEGMIDNAREQGAYFMQRLRALPGPVREVRGRGLMLALELEPDAGPARAYCERLMARGMLVKDTHGQTLRLSPPLIVTREQIDWACAQLAHVLAHSAPGSSGGPS.

Lysine 257 is modified (N6-(pyridoxal phosphate)lysine).

This sequence belongs to the class-III pyridoxal-phosphate-dependent aminotransferase family. OAT subfamily. It depends on pyridoxal 5'-phosphate as a cofactor.

It localises to the cytoplasm. The catalysed reaction is a 2-oxocarboxylate + L-ornithine = L-glutamate 5-semialdehyde + an L-alpha-amino acid. It participates in amino-acid biosynthesis; L-proline biosynthesis; L-glutamate 5-semialdehyde from L-ornithine: step 1/1. Its function is as follows. Catalyzes the interconversion of ornithine to glutamate semialdehyde. This Bordetella bronchiseptica (strain ATCC BAA-588 / NCTC 13252 / RB50) (Alcaligenes bronchisepticus) protein is Ornithine aminotransferase.